We begin with the raw amino-acid sequence, 162 residues long: Small ribosomal subunit protein uS12m (162 aa).

Residues 1–37 (MIRFAQYARYPVISRLMKPTVISPFQAQAFSSSSVML) constitute a mitochondrion transit peptide.

It belongs to the universal ribosomal protein uS12 family. As to quaternary structure, component of the mitochondrial small ribosomal subunit (mt-SSU). Mature yeast 74S mitochondrial ribosomes consist of a small (37S) and a large (54S) subunit. The 37S small subunit contains a 15S ribosomal RNA (15S mt-rRNA) and at least 32 different proteins. The 54S large subunit contains a 21S rRNA (21S mt-rRNA) and at least 45 different proteins. uS12m forms part of the decoding center of the mt-SSU.

The protein localises to the mitochondrion. Its function is as follows. Component of the mitochondrial ribosome (mitoribosome), a dedicated translation machinery responsible for the synthesis of mitochondrial genome-encoded proteins, including at least some of the essential transmembrane subunits of the mitochondrial respiratory chain. The mitoribosomes are attached to the mitochondrial inner membrane and translation products are cotranslationally integrated into the membrane. uS12m is required for respiratory growth. This chain is Small ribosomal subunit protein uS12m, found in Schizosaccharomyces pombe (strain 972 / ATCC 24843) (Fission yeast).